Reading from the N-terminus, the 216-residue chain is MGQKVNPIGLRLGINKNWNSRWYADKSYRSMLYEDLKIRGYLKKKLYHAGISHIDIERAVNKAKVNIYAARPGIIIGKKGAEIEKLKKELENVSSSEIIINILEVRKPEIDAQLVAENIATQLERRVAFRRAMKKCVLTALKFGAKGIRVSCSGRLGGAEMSRTEWYREGRVPLHTLRADIDSGFTEAKTAYGQIGIKVLIFHGEVLPGRKELEKP.

The KH type-2 domain occupies 38-106 (IRGYLKKKLY…EIIINILEVR (69 aa)).

The protein belongs to the universal ribosomal protein uS3 family. Part of the 30S ribosomal subunit. Forms a tight complex with proteins S10 and S14.

Its function is as follows. Binds the lower part of the 30S subunit head. Binds mRNA in the 70S ribosome, positioning it for translation. In Syntrophus aciditrophicus (strain SB), this protein is Small ribosomal subunit protein uS3.